We begin with the raw amino-acid sequence, 378 residues long: tRNA-specific 2-thiouridylase MnmA (378 aa).

ATP-binding positions include 6-13 and L32; that span reads AMSGGVDS. C101 (nucleophile) is an active-site residue. Residues C101 and C199 are joined by a disulfide bond. ATP is bound at residue G125. The interaction with tRNA stretch occupies residues 148–150; it reads KDQ. The Cysteine persulfide intermediate role is filled by C199.

Belongs to the MnmA/TRMU family.

The protein resides in the cytoplasm. The catalysed reaction is S-sulfanyl-L-cysteinyl-[protein] + uridine(34) in tRNA + AH2 + ATP = 2-thiouridine(34) in tRNA + L-cysteinyl-[protein] + A + AMP + diphosphate + H(+). Its function is as follows. Catalyzes the 2-thiolation of uridine at the wobble position (U34) of tRNA, leading to the formation of s(2)U34. The sequence is that of tRNA-specific 2-thiouridylase MnmA from Renibacterium salmoninarum (strain ATCC 33209 / DSM 20767 / JCM 11484 / NBRC 15589 / NCIMB 2235).